A 162-amino-acid polypeptide reads, in one-letter code: Chemoreceptor glutamine deamidase CheD (162 aa).

The protein belongs to the CheD family. In terms of assembly, forms a complex with CheC.

It catalyses the reaction L-glutaminyl-[protein] + H2O = L-glutamyl-[protein] + NH4(+). In terms of biological role, deamidates glutamine residues to glutamate on methyl-accepting chemotaxis receptors (MCPs). CheD-mediated MCP deamidation is required for productive communication of the conformational signals of the chemoreceptors to the CheA kinase. In Halalkalibacterium halodurans (strain ATCC BAA-125 / DSM 18197 / FERM 7344 / JCM 9153 / C-125) (Bacillus halodurans), this protein is Chemoreceptor glutamine deamidase CheD.